A 95-amino-acid chain; its full sequence is Large ribosomal subunit protein bL25 (95 aa).

Belongs to the bacterial ribosomal protein bL25 family. In terms of assembly, part of the 50S ribosomal subunit; part of the 5S rRNA/L5/L18/L25 subcomplex. Contacts the 5S rRNA. Binds to the 5S rRNA independently of L5 and L18.

This is one of the proteins that binds to the 5S RNA in the ribosome where it forms part of the central protuberance. In Shewanella sediminis (strain HAW-EB3), this protein is Large ribosomal subunit protein bL25.